We begin with the raw amino-acid sequence, 421 residues long: CaM kinase-like vesicle-associated protein (421 aa).

The region spanning 24-284 (YDLGQVVKSE…AQEAIAHEWI (261 aa)) is the Protein kinase domain. Residues 326–421 (ASEQGDTGAS…PQMLPQRKGY (96 aa)) are disordered. Low complexity-rich tracts occupy residues 330–340 (GDTGASGLAAG) and 390–406 (QQQA…QQAR).

Belongs to the protein kinase superfamily. CAMK Ser/Thr protein kinase family. As to quaternary structure, interacts with calmodulin, in the presence of calcium. Requires Ca(2+) as cofactor. As to expression, ubiquitously expressed.

The protein localises to the cytoplasmic vesicle membrane. Does not appear to have detectable kinase activity. This is CaM kinase-like vesicle-associated protein (camkv) from Takifugu rubripes (Japanese pufferfish).